Reading from the N-terminus, the 601-residue chain is Oligoendopeptidase F, plasmid (601 aa).

His-387 is a Zn(2+) binding site. The active site involves Glu-388. 2 residues coordinate Zn(2+): His-391 and His-394.

This sequence belongs to the peptidase M3B family. The cofactor is Zn(2+).

Its function is as follows. Hydrolyzes peptides containing between 7 and 17 amino acids with a rather wide specificity. The polypeptide is Oligoendopeptidase F, plasmid (pepF1) (Lactococcus lactis subsp. cremoris (Streptococcus cremoris)).